The following is a 348-amino-acid chain: Methylthioribose-1-phosphate isomerase (348 aa).

Substrate-binding positions include 54–56, arginine 96, and glutamine 199; that span reads RGA. Catalysis depends on aspartate 240, which acts as the Proton donor. Position 250–251 (250–251) interacts with substrate; sequence NK.

This sequence belongs to the eIF-2B alpha/beta/delta subunits family. MtnA subfamily.

It catalyses the reaction 5-(methylsulfanyl)-alpha-D-ribose 1-phosphate = 5-(methylsulfanyl)-D-ribulose 1-phosphate. Its pathway is amino-acid biosynthesis; L-methionine biosynthesis via salvage pathway; L-methionine from S-methyl-5-thio-alpha-D-ribose 1-phosphate: step 1/6. Catalyzes the interconversion of methylthioribose-1-phosphate (MTR-1-P) into methylthioribulose-1-phosphate (MTRu-1-P). This is Methylthioribose-1-phosphate isomerase from Thioalkalivibrio sulfidiphilus (strain HL-EbGR7).